Consider the following 359-residue polypeptide: Hereditary hemochromatosis protein homolog (359 aa).

The first 24 residues, 1–24, serve as a signal peptide directing secretion; that stretch reads MSLSAGLPVRPLLLLLLLLWSVAP. The interval 25–126 is alpha-1; the sequence is QALPPRSHSL…KVTKLGVVSE (102 aa). Topologically, residues 25–318 are extracellular; it reads QALPPRSHSL…WEPLQSQAMI (294 aa). 4 N-linked (GlcNAc...) asparagine glycosylation sites follow: N114, N142, N166, and N246. An alpha-2 region spans residues 127 to 217; sequence SHILQVVLGC…ELGRGVLGQQ (91 aa). 2 disulfides stabilise this stretch: C136–C199 and C237–C294. Positions 218 to 309 are alpha-3; sequence VPTLVKVTRH…GLDQPLTASW (92 aa). Residues 219 to 308 enclose the Ig-like C1-type domain; sequence PTLVKVTRHW…PGLDQPLTAS (90 aa). Positions 310–318 are connecting peptide; that stretch reads EPLQSQAMI. The helical transmembrane segment at 319–339 threads the bilayer; that stretch reads IGIISGVTVCAIFLVGILFLI. Topologically, residues 340-359 are cytoplasmic; that stretch reads LRKRKASGGTMGGYVLTDCE.

Belongs to the MHC class I family. Binds TFR through the extracellular domain in a pH-dependent manner.

Its subcellular location is the cell membrane. Its function is as follows. Binds to transferrin receptor (TFR) and reduces its affinity for iron-loaded transferrin. This chain is Hereditary hemochromatosis protein homolog (Hfe), found in Mus musculus (Mouse).